A 312-amino-acid polypeptide reads, in one-letter code: MGISNFASICSRTPLPLCSVIKSTTHLVLSNSTKIHDFDPQHLNIGILPKCYARSIDIANTTIFGIGNAFINIAALGVILIILYNIRQKYTAIGRSEYLYFFQLTLLLIIFTLIVNCGVSPPGSNSFPYFVAVQIGLAGACCWTLLINGFLGFNLWEDGTTKSMLLVRGFSLCGFMANFLASILTFRTWIENHEIPNTNTTALFVVVYLWNLINLFIFVICQLFVSFFIVRNLWVTGAVLLGVFFFVAGQILTYGFSSQICEGVKHYLDGLFFGSICNIFTLMMVYKTWDITTDDDLEFSVSIDKNGDVLYN.

The next 7 helical transmembrane spans lie at 63 to 83 (IFGI…LIIL), 99 to 119 (LYFF…NCGV), 127 to 147 (FPYF…TLLI), 164 to 184 (MLLV…ASIL), 201 to 221 (TALF…FVIC), 233 to 253 (LWVT…QILT), and 266 to 286 (HYLD…MMVY).

It belongs to the CHS7 family. As to quaternary structure, interacts with CHS3.

The protein resides in the endoplasmic reticulum membrane. In terms of biological role, chaperone required for the export of the chitin synthase CHS3 from the endoplasmic reticulum. This Candida glabrata (strain ATCC 2001 / BCRC 20586 / JCM 3761 / NBRC 0622 / NRRL Y-65 / CBS 138) (Yeast) protein is Chitin synthase export chaperone (CHS7).